The sequence spans 303 residues: Polyisoprenyl-teichoic acid--peptidoglycan teichoic acid transferase TagU (303 aa).

Residues 1–4 (MKKK) lie on the Cytoplasmic side of the membrane. A helical; Signal-anchor for type II membrane protein transmembrane segment spans residues 5 to 25 (ILFWVLGILGVLIIGGGIYAY). The Extracellular portion of the chain corresponds to 26-303 (NVYSSVSNTL…KLRSHLEVTK (278 aa)).

The protein belongs to the LytR/CpsA/Psr (LCP) family.

It is found in the cell membrane. Its pathway is cell wall biogenesis. In terms of biological role, may catalyze the final step in cell wall teichoic acid biosynthesis, the transfer of the anionic cell wall polymers (APs) from their lipid-linked precursor to the cell wall peptidoglycan (PG). This is Polyisoprenyl-teichoic acid--peptidoglycan teichoic acid transferase TagU from Bacillus cereus (strain AH820).